The following is an 86-amino-acid chain: Large ribosomal subunit protein bL27 (86 aa).

The segment at Met1 to Val23 is disordered.

The protein belongs to the bacterial ribosomal protein bL27 family.

The polypeptide is Large ribosomal subunit protein bL27 (Alkalilimnicola ehrlichii (strain ATCC BAA-1101 / DSM 17681 / MLHE-1)).